The primary structure comprises 66 residues: DNA-directed RNA polymerase subunit Rpo10 (66 aa).

The Zn(2+) site is built by cysteine 7, cysteine 10, cysteine 44, and cysteine 45.

It belongs to the archaeal Rpo10/eukaryotic RPB10 RNA polymerase subunit family. Part of the RNA polymerase complex. Requires Zn(2+) as cofactor.

Its subcellular location is the cytoplasm. The catalysed reaction is RNA(n) + a ribonucleoside 5'-triphosphate = RNA(n+1) + diphosphate. Functionally, DNA-dependent RNA polymerase (RNAP) catalyzes the transcription of DNA into RNA using the four ribonucleoside triphosphates as substrates. This Saccharolobus islandicus (strain Y.N.15.51 / Yellowstone #2) (Sulfolobus islandicus) protein is DNA-directed RNA polymerase subunit Rpo10.